We begin with the raw amino-acid sequence, 441 residues long: Gamma-glutamyl phosphate reductase (441 aa).

Belongs to the gamma-glutamyl phosphate reductase family.

The protein localises to the cytoplasm. The enzyme catalyses L-glutamate 5-semialdehyde + phosphate + NADP(+) = L-glutamyl 5-phosphate + NADPH + H(+). The protein operates within amino-acid biosynthesis; L-proline biosynthesis; L-glutamate 5-semialdehyde from L-glutamate: step 2/2. Its function is as follows. Catalyzes the NADPH-dependent reduction of L-glutamate 5-phosphate into L-glutamate 5-semialdehyde and phosphate. The product spontaneously undergoes cyclization to form 1-pyrroline-5-carboxylate. The protein is Gamma-glutamyl phosphate reductase of Hydrogenobaculum sp. (strain Y04AAS1).